We begin with the raw amino-acid sequence, 528 residues long: Nucleolar GTP-binding protein 1 (528 aa).

Residues 168–335 (RTLLVCGFPN…VKAMACDLLL (168 aa)) enclose the OBG-type G domain. GTP-binding positions include 174-181 (GFPNVGKS), 220-224 (DTPGI), and 287-290 (SKSD). Positions 470-528 (PDSWKHRSRNSGGDIAVHVRRDSKTQVAQPPRLPSKKKARFDDKHYYDRKPKHLYRGRK) are disordered. A compositionally biased stretch (basic and acidic residues) spans 509–518 (RFDDKHYYDR). Positions 519-528 (KPKHLYRGRK) are enriched in basic residues.

It belongs to the TRAFAC class OBG-HflX-like GTPase superfamily. OBG GTPase family. NOG subfamily.

It localises to the nucleus. It is found in the nucleolus. Involved in the biogenesis of the 60S ribosomal subunit. This is Nucleolar GTP-binding protein 1 (NOG1) from Encephalitozoon cuniculi (strain GB-M1) (Microsporidian parasite).